Here is a 355-residue protein sequence, read N- to C-terminus: Undecaprenyl-phosphate alpha-N-acetylglucosaminyl 1-phosphate transferase (355 aa).

The next 8 membrane-spanning stretches (helical) occupy residues 1–21, 39–59, 63–83, 123–143, 182–202, 208–228, 237–257, and 315–335; these read MLSIFVTFLGAFLTLIVMRPL, GTIPLIGGASLFVGNLCYYLM, QLRLPYLYLFSIFVLLAIGIL, FQLTLGSIGLIITVFATIAII, WSFALIVSILPYLMLNLGIPF, VFMGDAGSTLIGFTIIWILLL, MNPVTALWIIAIPLIDMVAII, and WAMFVGFFILFFLYVYSITHA.

Belongs to the glycosyltransferase 4 family. WecA subfamily. Requires Mg(2+) as cofactor. Mn(2+) is required as a cofactor.

Its subcellular location is the cell inner membrane. The catalysed reaction is di-trans,octa-cis-undecaprenyl phosphate + UDP-N-acetyl-alpha-D-glucosamine = N-acetyl-alpha-D-glucosaminyl-di-trans,octa-cis-undecaprenyl diphosphate + UMP. The protein operates within bacterial outer membrane biogenesis; LPS O-antigen biosynthesis. Its function is as follows. Catalyzes the transfer of the GlcNAc-1-phosphate moiety from UDP-GlcNAc onto the carrier lipid undecaprenyl phosphate (C55-P), yielding GlcNAc-pyrophosphoryl-undecaprenyl (GlcNAc-PP-C55). This Haemophilus influenzae (strain ATCC 51907 / DSM 11121 / KW20 / Rd) protein is Undecaprenyl-phosphate alpha-N-acetylglucosaminyl 1-phosphate transferase.